The sequence spans 213 residues: Receptor-binding cancer antigen expressed on SiSo cells (213 aa).

At 1–6 the chain is on the extracellular side; it reads MAITQF. The chain crosses the membrane as a helical; Signal-anchor for type III membrane protein span at residues 7–27; the sequence is RLFKFCTCLATVFSFLKRLIC. At 28 to 213 the chain is on the cytoplasmic side; the sequence is RSGRGRKLSG…EQNKIGVKLS (186 aa). Phosphoserine is present on serine 36. Residue threonine 41 is modified to Phosphothreonine. Residue tyrosine 94 is modified to Phosphotyrosine. The stretch at 163–211 forms a coiled coil; that stretch reads EDAAWQAEEVLRQQKLADREKRAAEQQRKKMEKEAQRLMKKEQNKIGVK. Positions 178–206 are enriched in basic and acidic residues; sequence LADREKRAAEQQRKKMEKEAQRLMKKEQN. The tract at residues 178 to 213 is disordered; sequence LADREKRAAEQQRKKMEKEAQRLMKKEQNKIGVKLS.

As to quaternary structure, homodimer. In terms of tissue distribution, widely expressed. Expressed in ovary, testis, prostate, thymus, muscle and heart, but not in small intestine, colon, lymph nodes, or peripherical blood lymphocytes. The protein is not detected in any of the above organs.

The protein localises to the golgi apparatus membrane. May participate in suppression of cell proliferation and induces apoptotic cell death through activation of interleukin-1-beta converting enzyme (ICE)-like proteases. The polypeptide is Receptor-binding cancer antigen expressed on SiSo cells (EBAG9) (Homo sapiens (Human)).